A 1678-amino-acid polypeptide reads, in one-letter code: MTQPLPIRFQEHLQLTNVGINANSFSFSTLTMESDKFICVREKVNDTAQVVIIDMNDATNPTRRPISADSAIMNPASKVIALKAQKTLQIFNIEMKSKMKAHTMNEDVVFWKWISLNTLALVTETSVFHWSMEGDSMPQKMFDRHSSLNGCQIINYRCNASQQWLLLVGISALPSRVAGAMQLYSVERKVSQAIEGHAASFATFKIDANKEPTTLFCFAVRTATGGKLHIIEVGAPPNGNQPFAKKAVDVFFPPEAQNDFPVAMQVSAKYDTIYLITKYGYIHLYDMETATCIYMNRISADTIFVTAPHEASGGIIGVNRKGQVLSVTVDEEQIIPYINTVLQNPDLALRMAVRNNLAGAEDLFVRKFNKLFTAGQYAEAAKVAALAPKAILRTPQTIQRFQQVQTPAGSTTPPLLQYFGILLDQGKLNKFESLELCRPVLLQGKKQLCEKWLKEEKLECSEELGDLVKASDLTLALSIYLRANVPNKVIQCFAETGQFQKIVLYAKKVNYTPDYVFLLRSVMRSNPEQGAGFASMLVAEEEPLADINQIVDIFMEHSMVQQCTAFLLDALKHNRPAEGALQTRLLEMNLMSAPQVADAILGNAMFTHYDRAHIAQLCEKAGLLQRALEHYTDLYDIKRAVVHTHMLNAEWLVSFFGTLSVEDSLECLKAMLTANLRQNLQICVQIATKYHEQLTNKALIDLFEGFKSYDGLFYFLSSIVNFSQDPEVHFKYIQAACKTNQIKEVERICRESNCYNPERVKNFLKEAKLTDQLPLIIVCDRFDFVHDLVLYLYRNNLQKYIEIYVQKVNPSRLPVVVGGLLDVDCSEDIIKNLILVVKGQFSTDELVEEVEKRNRLKLLLPWLESRVHEGCVEPATHNALAKIYIDSNNNPERYLKENQYYDSRVVGRYCEKRDPHLACVAYERGLCDRELIAVCNENSLFKSEARYLVGRRDAELWAEVLSESNPYKRQLIDQVVQTALSETQDPDDISVTVKAFMTADLPNELIELLEKIILDSSVFSDHRNLQNLLILTAIKADRTRVMDYINRLENYDAPDIANIAISNQLYEEAFAIFKKFDVNTSAIQVLIDQVNNLERANEFAERCNEPAVWSQLAKAQLQQGLVKEAIDSYIKADDPSAYVDVVDVASKVESWDDLVRYLQMARKKARESYIESELIYAYARTGRLADLEEFISGPNHADIQKIGNRCFSDGMYDAAKLLYNNVSNFARLAITLVYLKEFQGAVDSARKANSTRTWKEVCFACVDAEEFRLAQMCGLHIVVHADELEDLINYYQNRGYFDELIALLESALGLERAHMGMFTELAILYSKFKPSKMREHLELFWSRVNIPKVLRAAESAHLWSELVFLYDKYEEYDNAVLAMMAHPTEAWREGHFKDIITKVANIELYYKAIEFYLDFKPLLLNDMLLVLAPRMDHTRAVSYFSKTGYLPLVKPYLRSVQSLNNKAINEALNGLLIDEEDYQGLRNSIDGFDNFDNIALAQKLEKHELTEFRRIAAYLYKGNNRWKQSVELCKKDKLYKDAMEYAAESCKQDIAEELLGWFLERDAYDCFAACLYQCYDLLRPDVILELAWKHKIVDFAMPYLIQVLREYTTKVDKLELNEAQREKEDDSTEHKNIIQMEPQLMITAGPAMGIPPQYAQNYPPGAATVTAAGGRNMGYPYL.

7 WD40-like repeat regions span residues 24–67 (SFSF…RPIS), 68–107 (ADSAIMNPASKVIALKAQKTLQIFNIEMKSKMKAHTMNED), 108–149 (VVFW…SSLN), 150–195 (GCQI…QAIE), 196–257 (GHAA…PEAQ), 258–301 (NDFP…ISAD), and 302–330 (TIFVTAPHEASGGIIGVNRKGQVLSVTVD). CHCR repeat units follow at residues 538–684 (VAEE…QICV), 687–829 (ATKY…SEDI), 834–973 (ILVV…QLID), 980–1125 (LSET…VKEA), 1129–1270 (YIKA…FRLA), 1275–1421 (LHIV…LLLN), and 1424–1567 (LLVL…YDCF). Residues 1334 to 1643 (REHLELFWSR…IQMEPQLMIT (310 aa)) form an involved in binding clathrin light chain region. The tract at residues 1552–1677 (EELLGWFLER…AGGRNMGYPY (126 aa)) is trimerization.

It belongs to the clathrin heavy chain family. Clathrin triskelions, composed of 3 heavy chains and 3 light chains, are the basic subunits of the clathrin coat. Interacts with sau.

It localises to the cytoplasmic vesicle membrane. Its subcellular location is the membrane. The protein resides in the coated pit. Its function is as follows. Clathrin is the major protein of the polyhedral coat of coated pits and vesicles. In Drosophila melanogaster (Fruit fly), this protein is Clathrin heavy chain (Chc).